The chain runs to 420 residues: UDP-N-acetylglucosamine 1-carboxyvinyltransferase 2 (420 aa).

22 to 23 is a binding site for phosphoenolpyruvate; the sequence is KN. Position 92 (R92) interacts with UDP-N-acetyl-alpha-D-glucosamine. C116 acts as the Proton donor in catalysis. C116 carries the 2-(S-cysteinyl)pyruvic acid O-phosphothioketal modification. UDP-N-acetyl-alpha-D-glucosamine contacts are provided by residues 121 to 125, D307, and I329; that span reads RPIDL.

Belongs to the EPSP synthase family. MurA subfamily.

Its subcellular location is the cytoplasm. The enzyme catalyses phosphoenolpyruvate + UDP-N-acetyl-alpha-D-glucosamine = UDP-N-acetyl-3-O-(1-carboxyvinyl)-alpha-D-glucosamine + phosphate. It participates in cell wall biogenesis; peptidoglycan biosynthesis. Its function is as follows. Cell wall formation. Adds enolpyruvyl to UDP-N-acetylglucosamine. The protein is UDP-N-acetylglucosamine 1-carboxyvinyltransferase 2 of Streptococcus thermophilus (strain ATCC BAA-250 / LMG 18311).